Reading from the N-terminus, the 176-residue chain is ATP-dependent protease subunit HslV (176 aa).

Thr-2 is an active-site residue. Na(+)-binding residues include Gly-157, Cys-160, and Thr-163.

This sequence belongs to the peptidase T1B family. HslV subfamily. In terms of assembly, a double ring-shaped homohexamer of HslV is capped on each side by a ring-shaped HslU homohexamer. The assembly of the HslU/HslV complex is dependent on binding of ATP.

Its subcellular location is the cytoplasm. The enzyme catalyses ATP-dependent cleavage of peptide bonds with broad specificity.. Allosterically activated by HslU binding. Functionally, protease subunit of a proteasome-like degradation complex believed to be a general protein degrading machinery. This chain is ATP-dependent protease subunit HslV, found in Pseudomonas putida (strain ATCC 47054 / DSM 6125 / CFBP 8728 / NCIMB 11950 / KT2440).